Reading from the N-terminus, the 67-residue chain is ATP synthase subunit c (67 aa).

2 consecutive transmembrane segments (helical) span residues Ile-6–Asn-26 and Ile-46–Val-66.

It belongs to the ATPase C chain family. F-type ATPases have 2 components, F(1) - the catalytic core - and F(0) - the membrane proton channel. F(1) has five subunits: alpha(3), beta(3), gamma(1), delta(1), epsilon(1). F(0) has three main subunits: a(1), b(2) and c(10-14). The alpha and beta chains form an alternating ring which encloses part of the gamma chain. F(1) is attached to F(0) by a central stalk formed by the gamma and epsilon chains, while a peripheral stalk is formed by the delta and b chains.

It is found in the cell membrane. In terms of biological role, f(1)F(0) ATP synthase produces ATP from ADP in the presence of a proton or sodium gradient. F-type ATPases consist of two structural domains, F(1) containing the extramembraneous catalytic core and F(0) containing the membrane proton channel, linked together by a central stalk and a peripheral stalk. During catalysis, ATP synthesis in the catalytic domain of F(1) is coupled via a rotary mechanism of the central stalk subunits to proton translocation. Functionally, key component of the F(0) channel; it plays a direct role in translocation across the membrane. A homomeric c-ring of between 10-14 subunits forms the central stalk rotor element with the F(1) delta and epsilon subunits. The polypeptide is ATP synthase subunit c (Streptococcus mutans serotype c (strain ATCC 700610 / UA159)).